The chain runs to 432 residues: Enolase (432 aa).

Residue glutamine 163 coordinates (2R)-2-phosphoglycerate. Residue glutamate 205 is the Proton donor of the active site. Aspartate 242, glutamate 288, and aspartate 315 together coordinate Mg(2+). The (2R)-2-phosphoglycerate site is built by lysine 340, arginine 369, serine 370, and lysine 391. The Proton acceptor role is filled by lysine 340.

It belongs to the enolase family. In terms of assembly, homodimer. It depends on Mg(2+) as a cofactor.

The protein localises to the cytoplasm. It is found in the secreted. It localises to the cell surface. It carries out the reaction (2R)-2-phosphoglycerate = phosphoenolpyruvate + H2O. Its pathway is carbohydrate degradation; glycolysis; pyruvate from D-glyceraldehyde 3-phosphate: step 4/5. Its activity is regulated as follows. The covalent binding to the substrate causes inactivation of the enzyme, and possibly serves as a signal for the export of the protein. Functionally, catalyzes the reversible conversion of 2-phosphoglycerate (2-PG) into phosphoenolpyruvate (PEP). It is essential for the degradation of carbohydrates via glycolysis. This chain is Enolase, found in Enterococcus hirae.